We begin with the raw amino-acid sequence, 735 residues long: Disintegrin and metalloproteinase domain-containing protein 2 (735 aa).

An N-terminal signal peptide occupies residues 1 to 18 (MWLILLLLSGLSELGGLS). A propeptide spanning residues 19–180 (QSQTEGTREK…YKIRSIKPQR (162 aa)) is cleaved from the precursor. Residues 19–686 (QSQTEGTREK…ASAYRSKSPR (668 aa)) lie on the Extracellular side of the membrane. Asn-128, Asn-226, and Asn-279 each carry an N-linked (GlcNAc...) asparagine glycan. Positions 184–381 (HYLEIHIVVE…QSSHCLQNQP (198 aa)) constitute a Peptidase M12B domain. 4 cysteine pairs are disulfide-bonded: Cys-293/Cys-376, Cys-335/Cys-360, Cys-337/Cys-342, and Cys-449/Cys-469. 5 N-linked (GlcNAc...) asparagine glycosylation sites follow: Asn-359, Asn-463, Asn-489, Asn-569, and Asn-585. A Disintegrin domain is found at 389 to 476 (MAVCGNGEVE…EVCEDFFVQN (88 aa)). The EGF-like domain occupies 615 to 648 (LGYDCNLEKCNHHGVCNNKKNCHCDPTYLPPDCK). Cystine bridges form between Cys-619–Cys-630, Cys-624–Cys-636, and Cys-638–Cys-647. A helical transmembrane segment spans residues 687-707 (WPFFLIIPFYVVILVLIGMLV). Residues 708–735 (KVYSQRMKWRMDDFSSEEQFESESESKD) lie on the Cytoplasmic side of the membrane. Phosphoserine is present on Ser-729.

As to quaternary structure, heterodimer with ADAM1/fertilin subunit alpha. The signal and the metalloprotease domain are cleaved during the epididymal maturation of the spermatozoa. As to expression, expressed in the testis and testicular sperm (at protein level).

It localises to the membrane. Its function is as follows. Sperm surface membrane protein that may be involved in sperm-egg plasma membrane adhesion and fusion during fertilization. Could have a direct role in sperm-zona binding or migration of sperm from the uterus into the oviduct. Interactions with egg membrane could be mediated via binding between its disintegrin-like domain to one or more integrins receptors on the egg. This is a non catalytic metalloprotease-like protein. This is Disintegrin and metalloproteinase domain-containing protein 2 from Mus musculus (Mouse).